Consider the following 593-residue polypeptide: Myc box-dependent-interacting protein 1 (593 aa).

N-acetylalanine is present on A2. The tract at residues 2–122 is interaction with BIN2; it reads AEMGSKGVTA…DYHQKLVDQA (121 aa). Coiled-coil stretches lie at residues 15 to 42 and 193 to 267; these read ASNV…TKDE and HLVA…NDVL. Residues 29-276 form the BAR domain; that stretch reads VLQKLGKADE…LVGLEKQHGS (248 aa). 2 disordered regions span residues 280–354 and 400–488; these read TVKA…KEVK and PVTS…AASS. Phosphoserine is present on residues S296, S298, and S303. A phosphothreonine mark is found at T307 and T323. At S331 the chain carries Phosphoserine. The segment at 378–421 is clathrin-binding; the sequence is FEAPGPFSEQASLLDLDFDPLPPVTSPVKAPTPSGQSIPWDLWE. In terms of domain architecture, SH3 spans 520–593; the sequence is GFMFKVQAQH…FPENFTERVP (74 aa).

Heterodimer with AMPH. Binds SH3GLB1. Interacts (via SH3 domain) with DNM1. Interacts with SYNJ1. Interacts (via SH3 domain) with DNM2. Isoform IIA interacts with CLTC. Isoform IIB does not interact with CLTC. Isoform IIC1 does not interact with CLTC. Isoform IIC2 does not interact with CLTC. Interacts with AP2A2. Interacts with AP2B1. Interacts with MYC (via N-terminal transactivation domain); the interaction requires the integrity of the conserved MYC box regions 1 and 2. Interacts with BIN2. Interacts with SNX4. Interacts (via BAR domain) with BACE1. Binds (via BAR domain) F-actin. As to quaternary structure, (Microbial infection) Interacts (SH3 domain) with HCV NS5A. Phosphorylated by protein kinase C. As to expression, ubiquitous. Highest expression in the brain and muscle. Expressed in oligodendrocytes. Isoform IIA is expressed only in the brain, where it is detected in the gray matter, but not in the white matter. Isoform BIN1 is widely expressed with highest expression in skeletal muscle.

Its subcellular location is the nucleus. It localises to the cytoplasm. It is found in the endosome. The protein resides in the cell membrane. The protein localises to the sarcolemma. Its subcellular location is the T-tubule. Its function is as follows. Is a key player in the control of plasma membrane curvature, membrane shaping and membrane remodeling. Required in muscle cells for the formation of T-tubules, tubular invaginations of the plasma membrane that function in depolarization-contraction coupling. Is a negative regulator of endocytosis. Is also involved in the regulation of intracellular vesicles sorting, modulation of BACE1 trafficking and the control of amyloid-beta production. In neuronal circuits, endocytosis regulation may influence the internalization of PHF-tau aggregates. May be involved in the regulation of MYC activity and the control cell proliferation. Has actin bundling activity and stabilizes actin filaments against depolymerization in vitro. This Homo sapiens (Human) protein is Myc box-dependent-interacting protein 1 (BIN1).